The following is a 376-amino-acid chain: Carbamoyl phosphate synthase small chain (376 aa).

Positions 1–181 (MSKAVLVLED…VEPDGPPGVS (181 aa)) are nucleophile. A CPSase region spans residues 1-183 (MSKAVLVLED…PDGPPGVSRF (183 aa)). 8 residues coordinate L-glutamine: S46, G232, G234, F261, Q264, N302, G304, and F305. One can recognise a Glutamine amidotransferase type-1 domain in the interval 184 to 376 (TVAALDLGIK…FVELMAGEGR (193 aa)). Active-site residues include H350 and E352.

Belongs to the CarA family. Composed of two chains; the small (or glutamine) chain promotes the hydrolysis of glutamine to ammonia, which is used by the large (or ammonia) chain to synthesize carbamoyl phosphate. Tetramer of heterodimers (alpha,beta)4.

It catalyses the reaction hydrogencarbonate + L-glutamine + 2 ATP + H2O = carbamoyl phosphate + L-glutamate + 2 ADP + phosphate + 2 H(+). The catalysed reaction is L-glutamine + H2O = L-glutamate + NH4(+). It participates in amino-acid biosynthesis; L-arginine biosynthesis; carbamoyl phosphate from bicarbonate: step 1/1. The protein operates within pyrimidine metabolism; UMP biosynthesis via de novo pathway; (S)-dihydroorotate from bicarbonate: step 1/3. Functionally, small subunit of the glutamine-dependent carbamoyl phosphate synthetase (CPSase). CPSase catalyzes the formation of carbamoyl phosphate from the ammonia moiety of glutamine, carbonate, and phosphate donated by ATP, constituting the first step of 2 biosynthetic pathways, one leading to arginine and/or urea and the other to pyrimidine nucleotides. The small subunit (glutamine amidotransferase) binds and cleaves glutamine to supply the large subunit with the substrate ammonia. The chain is Carbamoyl phosphate synthase small chain from Mycobacterium tuberculosis (strain CDC 1551 / Oshkosh).